The chain runs to 489 residues: Rhamnulokinase (489 aa).

Position 13 to 17 (13 to 17 (ASSGR)) interacts with ATP. Residues C68 and C222 are joined by a disulfide bond. Substrate is bound by residues G83 and 236–238 (HDT). The active-site Proton acceptor is the D237. Residue T259 coordinates ATP. A substrate-binding site is contributed by N296. Q304 is a binding site for ATP. A disulfide bridge connects residues C353 and C370. Residue G402 coordinates ATP. C413 and C417 are joined by a disulfide.

This sequence belongs to the rhamnulokinase family. In terms of assembly, monomer. It depends on Mg(2+) as a cofactor.

It carries out the reaction L-rhamnulose + ATP = L-rhamnulose 1-phosphate + ADP + H(+). The protein operates within carbohydrate degradation; L-rhamnose degradation; glycerone phosphate from L-rhamnose: step 2/3. Functionally, involved in the catabolism of L-rhamnose (6-deoxy-L-mannose). Catalyzes the transfer of the gamma-phosphate group from ATP to the 1-hydroxyl group of L-rhamnulose to yield L-rhamnulose 1-phosphate. The chain is Rhamnulokinase from Escherichia coli O1:K1 / APEC.